We begin with the raw amino-acid sequence, 643 residues long: Arginine--tRNA ligase, mitochondrial (643 aa).

Residues 188-198 (PNIAKPFHAGH) carry the 'HIGH' region motif.

It belongs to the class-I aminoacyl-tRNA synthetase family.

It localises to the mitochondrion matrix. The enzyme catalyses tRNA(Arg) + L-arginine + ATP = L-arginyl-tRNA(Arg) + AMP + diphosphate. The polypeptide is Arginine--tRNA ligase, mitochondrial (MSR1) (Saccharomyces cerevisiae (strain ATCC 204508 / S288c) (Baker's yeast)).